Reading from the N-terminus, the 410-residue chain is Dihydrolipoyllysine-residue succinyltransferase component of 2-oxoglutarate dehydrogenase complex (410 aa).

A Lipoyl-binding domain is found at 3 to 81 (IINIFIPDLP…QVIGTLLKIG (79 aa)). N6-lipoyllysine is present on lysine 44. A Peripheral subunit-binding (PSBD) domain is found at 112–150 (TYSPTVRRLISMHDLRDVDIIQGTGTKNRLTRKDILNYL). Residues histidine 381 and aspartate 385 contribute to the active site.

Belongs to the 2-oxoacid dehydrogenase family. As to quaternary structure, forms a 24-polypeptide structural core with octahedral symmetry. Part of the 2-oxoglutarate dehydrogenase (OGDH) complex composed of E1 (2-oxoglutarate dehydrogenase), E2 (dihydrolipoamide succinyltransferase) and E3 (dihydrolipoamide dehydrogenase); the complex contains multiple copies of the three enzymatic components (E1, E2 and E3). It depends on (R)-lipoate as a cofactor.

It catalyses the reaction N(6)-[(R)-dihydrolipoyl]-L-lysyl-[protein] + succinyl-CoA = N(6)-[(R)-S(8)-succinyldihydrolipoyl]-L-lysyl-[protein] + CoA. It participates in amino-acid degradation; L-lysine degradation via saccharopine pathway; glutaryl-CoA from L-lysine: step 6/6. Functionally, E2 component of the 2-oxoglutarate dehydrogenase (OGDH) complex which catalyzes the second step in the conversion of 2-oxoglutarate to succinyl-CoA and CO(2). The protein is Dihydrolipoyllysine-residue succinyltransferase component of 2-oxoglutarate dehydrogenase complex (sucB) of Buchnera aphidicola subsp. Baizongia pistaciae (strain Bp).